Here is a 671-residue protein sequence, read N- to C-terminus: DNA ligase (671 aa).

NAD(+) is bound by residues 32 to 36, 81 to 82, and Glu-113; these read DAEYD and SL. The N6-AMP-lysine intermediate role is filled by Lys-115. The NAD(+) site is built by Arg-136, Glu-173, Lys-290, and Lys-314. 4 residues coordinate Zn(2+): Cys-408, Cys-411, Cys-426, and Cys-432. A BRCT domain is found at 593–671; that stretch reads EIDSPFAGKT…EAEMIRLLGA (79 aa).

It belongs to the NAD-dependent DNA ligase family. LigA subfamily. Mg(2+) serves as cofactor. Requires Mn(2+) as cofactor.

It catalyses the reaction NAD(+) + (deoxyribonucleotide)n-3'-hydroxyl + 5'-phospho-(deoxyribonucleotide)m = (deoxyribonucleotide)n+m + AMP + beta-nicotinamide D-nucleotide.. Functionally, DNA ligase that catalyzes the formation of phosphodiester linkages between 5'-phosphoryl and 3'-hydroxyl groups in double-stranded DNA using NAD as a coenzyme and as the energy source for the reaction. It is essential for DNA replication and repair of damaged DNA. In Salmonella paratyphi A (strain ATCC 9150 / SARB42), this protein is DNA ligase.